Here is a 145-residue protein sequence, read N- to C-terminus: Large ribosomal subunit protein uL15 (145 aa).

The disordered stretch occupies residues 1-50; it reads MLHTIKPVANARKTTKRLGRGPGSGTGKTSGKGHKGQLARSGKTLRPGFE. Residues 20–30 are compositionally biased toward gly residues; that stretch reads RGPGSGTGKTS.

Belongs to the universal ribosomal protein uL15 family. Part of the 50S ribosomal subunit.

Its function is as follows. Binds to the 23S rRNA. This Phytoplasma australiense protein is Large ribosomal subunit protein uL15.